A 422-amino-acid chain; its full sequence is Blood group Rh(D) polypeptide (422 aa).

The next 12 membrane-spanning stretches (helical) occupy residues 13 to 33 (LPLW…FLIG), 43 to 63 (FMAI…GFGF), 76 to 96 (VAFS…LDYF), 113 to 135 (FLSI…AVLG), 137 to 159 (VNLV…IRVA), 170 to 190 (IIMM…AWWL), 215 to 235 (LFAM…NSAL), 244 to 266 (AVFN…SALS), 272 to 292 (INMV…GAPS), 294 to 314 (LISS…ISIW), 335 to 355 (YTFG…HIIA), and 372 to 392 (VGAL…TGCL).

The protein belongs to the ammonium transporter (TC 2.A.49) family. Rh subfamily. In terms of processing, palmitoylated.

It localises to the cell membrane. In terms of biological role, may be part of an oligomeric complex which is likely to have a transport or channel function in the erythrocyte membrane. In Rattus norvegicus (Rat), this protein is Blood group Rh(D) polypeptide (Rhd).